Consider the following 690-residue polypeptide: DNA ligase (690 aa).

NAD(+) contacts are provided by residues 36-40, 85-86, and Glu124; these read DSVYD and SL. Lys126 (N6-AMP-lysine intermediate) is an active-site residue. Residues Arg147, Glu184, Lys308, and Lys332 each contribute to the NAD(+) site. 4 residues coordinate Zn(2+): Cys426, Cys429, Cys444, and Cys449. The 77-residue stretch at 614-690 folds into the BRCT domain; that stretch reads NQSNVFDGKS…INENELKLLL (77 aa).

It belongs to the NAD-dependent DNA ligase family. LigA subfamily. Mg(2+) serves as cofactor. The cofactor is Mn(2+).

It catalyses the reaction NAD(+) + (deoxyribonucleotide)n-3'-hydroxyl + 5'-phospho-(deoxyribonucleotide)m = (deoxyribonucleotide)n+m + AMP + beta-nicotinamide D-nucleotide.. Functionally, DNA ligase that catalyzes the formation of phosphodiester linkages between 5'-phosphoryl and 3'-hydroxyl groups in double-stranded DNA using NAD as a coenzyme and as the energy source for the reaction. It is essential for DNA replication and repair of damaged DNA. The chain is DNA ligase from Prochlorococcus marinus (strain NATL2A).